A 208-amino-acid chain; its full sequence is uncharacterized protein (208 aa).

The span at 1–18 (MSPTKDSHPSPHFPRDSG) shows a compositional bias: basic and acidic residues. Disordered stretches follow at residues 1-122 (MSPT…LPPP) and 135-208 (RECH…TPDG).

This is an uncharacterized protein from Homo sapiens (Human).